A 100-amino-acid polypeptide reads, in one-letter code: UPF0251 protein VV2_0946 (100 aa).

It belongs to the UPF0251 family.

In Vibrio vulnificus (strain CMCP6), this protein is UPF0251 protein VV2_0946.